Reading from the N-terminus, the 427-residue chain is Serine--tRNA ligase (427 aa).

231–233 (TAE) is a binding site for L-serine. ATP is bound at residue 262-264 (RSE). Position 285 (E285) interacts with L-serine. 349-352 (EISS) contributes to the ATP binding site. S385 lines the L-serine pocket.

It belongs to the class-II aminoacyl-tRNA synthetase family. Type-1 seryl-tRNA synthetase subfamily. In terms of assembly, homodimer. The tRNA molecule binds across the dimer.

The protein resides in the cytoplasm. It carries out the reaction tRNA(Ser) + L-serine + ATP = L-seryl-tRNA(Ser) + AMP + diphosphate + H(+). The catalysed reaction is tRNA(Sec) + L-serine + ATP = L-seryl-tRNA(Sec) + AMP + diphosphate + H(+). Its pathway is aminoacyl-tRNA biosynthesis; selenocysteinyl-tRNA(Sec) biosynthesis; L-seryl-tRNA(Sec) from L-serine and tRNA(Sec): step 1/1. Catalyzes the attachment of serine to tRNA(Ser). Is also able to aminoacylate tRNA(Sec) with serine, to form the misacylated tRNA L-seryl-tRNA(Sec), which will be further converted into selenocysteinyl-tRNA(Sec). The sequence is that of Serine--tRNA ligase from Sinorhizobium fredii (strain NBRC 101917 / NGR234).